The sequence spans 486 residues: Membrane-bound lytic murein transglycosylase F (486 aa).

Residues 1-21 form the signal peptide; the sequence is MTRIKLNYFVIGVVALLLALA. The non-LT domain stretch occupies residues 22 to 268; the sequence is LWPNIPWRNG…RLEEKYLGHV (247 aa). Residues 269–486 are LT domain; that stretch reads GSFDYVDTKT…VVGPGWSINN (218 aa). Glu313 is an active-site residue.

The protein in the N-terminal section; belongs to the bacterial solute-binding protein 3 family. This sequence in the C-terminal section; belongs to the transglycosylase Slt family.

The protein localises to the cell outer membrane. The enzyme catalyses Exolytic cleavage of the (1-&gt;4)-beta-glycosidic linkage between N-acetylmuramic acid (MurNAc) and N-acetylglucosamine (GlcNAc) residues in peptidoglycan, from either the reducing or the non-reducing ends of the peptidoglycan chains, with concomitant formation of a 1,6-anhydrobond in the MurNAc residue.. Murein-degrading enzyme that degrades murein glycan strands and insoluble, high-molecular weight murein sacculi, with the concomitant formation of a 1,6-anhydromuramoyl product. Lytic transglycosylases (LTs) play an integral role in the metabolism of the peptidoglycan (PG) sacculus. Their lytic action creates space within the PG sacculus to allow for its expansion as well as for the insertion of various structures such as secretion systems and flagella. This Yersinia enterocolitica serotype O:8 / biotype 1B (strain NCTC 13174 / 8081) protein is Membrane-bound lytic murein transglycosylase F.